Consider the following 953-residue polypeptide: Coatomer subunit beta (953 aa).

HEAT repeat units lie at residues 17–54 (DSEP…NGEK), 96–131 (QEMI…KEAE), 132–168 (LLEP…NFEH), 240–276 (SERA…SAPT), 277–314 (AIKA…HPSH), 316–353 (RVLQ…SRNV), and 396–433 (DMAA…RFDN).

In terms of assembly, oligomeric complex that consists of at least the alpha, beta, beta', gamma, delta, epsilon and zeta subunits.

The protein resides in the cytoplasm. It localises to the golgi apparatus membrane. It is found in the cytoplasmic vesicle. Its subcellular location is the COPI-coated vesicle membrane. In terms of biological role, the coatomer is a cytosolic protein complex that binds to dilysine motifs and reversibly associates with Golgi non-clathrin-coated vesicles, which further mediate biosynthetic protein transport from the ER, via the Golgi up to the trans Golgi network. Coatomer complex is required for budding from Golgi membranes, and is essential for the retrograde Golgi-to-ER transport of dilysine-tagged proteins. This chain is Coatomer subunit beta (COPB1), found in Gallus gallus (Chicken).